The following is a 259-amino-acid chain: Zinc import ATP-binding protein ZnuC (259 aa).

In terms of domain architecture, ABC transporter spans 22–238; that stretch reads VEARGLTVRR…PEYRALFGAH (217 aa). 54-61 serves as a coordination point for ATP; the sequence is GPNGSGKS.

It belongs to the ABC transporter superfamily. Zinc importer (TC 3.A.1.15.5) family. The complex is composed of two ATP-binding proteins (ZnuC), two transmembrane proteins (ZnuB) and a solute-binding protein (ZnuA).

The protein resides in the cell inner membrane. The catalysed reaction is Zn(2+)(out) + ATP(in) + H2O(in) = Zn(2+)(in) + ADP(in) + phosphate(in) + H(+)(in). In terms of biological role, part of the ABC transporter complex ZnuABC involved in zinc import. Responsible for energy coupling to the transport system. The protein is Zinc import ATP-binding protein ZnuC of Alkalilimnicola ehrlichii (strain ATCC BAA-1101 / DSM 17681 / MLHE-1).